A 542-amino-acid chain; its full sequence is CTP synthase (542 aa).

Residues 1–265 (MARYVFITGG…DSEILSAFGI (265 aa)) are amidoligase domain. S13 contributes to the CTP binding site. S13 contributes to the UTP binding site. 14 to 19 (SLGKGI) contributes to the ATP binding site. Y54 is an L-glutamine binding site. D71 serves as a coordination point for ATP. Residues D71 and E139 each contribute to the Mg(2+) site. CTP-binding positions include 146 to 148 (DIE), 186 to 191 (KTKPTQ), and K222. Residues 186-191 (KTKPTQ) and K222 contribute to the UTP site. Residues 291–541 (TIAIVGKYTG…IAATVEQSRL (251 aa)) form the Glutamine amidotransferase type-1 domain. An L-glutamine-binding site is contributed by A353. C380 acts as the Nucleophile; for glutamine hydrolysis in catalysis. Residues 381–384 (FGMQ), E404, and R469 contribute to the L-glutamine site. Residues H514 and E516 contribute to the active site.

It belongs to the CTP synthase family. In terms of assembly, homotetramer.

It carries out the reaction UTP + L-glutamine + ATP + H2O = CTP + L-glutamate + ADP + phosphate + 2 H(+). The catalysed reaction is L-glutamine + H2O = L-glutamate + NH4(+). It catalyses the reaction UTP + NH4(+) + ATP = CTP + ADP + phosphate + 2 H(+). The protein operates within pyrimidine metabolism; CTP biosynthesis via de novo pathway; CTP from UDP: step 2/2. Its activity is regulated as follows. Allosterically activated by GTP, when glutamine is the substrate; GTP has no effect on the reaction when ammonia is the substrate. The allosteric effector GTP functions by stabilizing the protein conformation that binds the tetrahedral intermediate(s) formed during glutamine hydrolysis. Inhibited by the product CTP, via allosteric rather than competitive inhibition. Its function is as follows. Catalyzes the ATP-dependent amination of UTP to CTP with either L-glutamine or ammonia as the source of nitrogen. Regulates intracellular CTP levels through interactions with the four ribonucleotide triphosphates. This chain is CTP synthase, found in Bartonella bacilliformis (strain ATCC 35685 / KC583 / Herrer 020/F12,63).